Consider the following 203-residue polypeptide: ATP-dependent Clp protease proteolytic subunit 2 (203 aa).

S100 functions as the Nucleophile in the catalytic mechanism. The active site involves H125.

Belongs to the peptidase S14 family. As to quaternary structure, fourteen ClpP subunits assemble into 2 heptameric rings which stack back to back to give a disk-like structure with a central cavity, resembling the structure of eukaryotic proteasomes.

The protein localises to the cytoplasm. The enzyme catalyses Hydrolysis of proteins to small peptides in the presence of ATP and magnesium. alpha-casein is the usual test substrate. In the absence of ATP, only oligopeptides shorter than five residues are hydrolyzed (such as succinyl-Leu-Tyr-|-NHMec, and Leu-Tyr-Leu-|-Tyr-Trp, in which cleavage of the -Tyr-|-Leu- and -Tyr-|-Trp bonds also occurs).. In terms of biological role, cleaves peptides in various proteins in a process that requires ATP hydrolysis. Has a chymotrypsin-like activity. Plays a major role in the degradation of misfolded proteins. The sequence is that of ATP-dependent Clp protease proteolytic subunit 2 from Thermobifida fusca (strain YX).